Reading from the N-terminus, the 72-residue chain is Translation initiation factor IF-1 2 (72 aa).

An S1-like domain is found at 1-72 (MSKDDVIEVE…TRGRIVYRYK (72 aa)).

This sequence belongs to the IF-1 family. In terms of assembly, component of the 30S ribosomal translation pre-initiation complex which assembles on the 30S ribosome in the order IF-2 and IF-3, IF-1 and N-formylmethionyl-tRNA(fMet); mRNA recruitment can occur at any time during PIC assembly.

Its subcellular location is the cytoplasm. Its function is as follows. One of the essential components for the initiation of protein synthesis. Stabilizes the binding of IF-2 and IF-3 on the 30S subunit to which N-formylmethionyl-tRNA(fMet) subsequently binds. Helps modulate mRNA selection, yielding the 30S pre-initiation complex (PIC). Upon addition of the 50S ribosomal subunit IF-1, IF-2 and IF-3 are released leaving the mature 70S translation initiation complex. In Symbiobacterium thermophilum (strain DSM 24528 / JCM 14929 / IAM 14863 / T), this protein is Translation initiation factor IF-1 2.